Consider the following 279-residue polypeptide: 5'-nucleotidase SurE 1 (279 aa).

A divalent metal cation is bound by residues Asp12, Asp13, Ser45, and Asn103.

The protein belongs to the SurE nucleotidase family. The cofactor is a divalent metal cation.

It is found in the cytoplasm. The enzyme catalyses a ribonucleoside 5'-phosphate + H2O = a ribonucleoside + phosphate. Nucleotidase that shows phosphatase activity on nucleoside 5'-monophosphates. The sequence is that of 5'-nucleotidase SurE 1 from Chlamydia caviae (strain ATCC VR-813 / DSM 19441 / 03DC25 / GPIC) (Chlamydophila caviae).